A 707-amino-acid polypeptide reads, in one-letter code: Lipase maturation factor 2 (707 aa).

10 helical membrane-spanning segments follow: residues 10–30 (LFLQ…YTQI), 78–98 (LELL…LSPL), 102–122 (VIYL…QVFL), 123–143 (YFQW…VAPL), 165–185 (DLPF…SGVV), 227–247 (LSVV…FAPI), 259–279 (VLLQ…LMTL), 310–330 (ALLA…LAYG), 364–384 (LTLP…LSAL), and 399–419 (AVVQ…ISLV). N-linked (GlcNAc...) asparagine glycans are attached at residues Asn489 and Asn616. The helical transmembrane segment at 637–657 (ALLWGLLMAVGAVRFVQALLA) threads the bilayer. A disordered region spans residues 665–707 (PLAPVSGEKRRPASQKDSGAASEQATAAPNPCSSSSRTTRRKK). Positions 679–691 (QKDSGAASEQATA) are enriched in polar residues.

It belongs to the lipase maturation factor family.

The protein localises to the endoplasmic reticulum membrane. Involved in the maturation of specific proteins in the endoplasmic reticulum. May be required for maturation and transport of active lipoprotein lipase (LPL) through the secretory pathway. The polypeptide is Lipase maturation factor 2 (LMF2) (Homo sapiens (Human)).